A 404-amino-acid polypeptide reads, in one-letter code: Imidazolonepropionase (404 aa).

His70 and His72 together coordinate Fe(3+). His70 and His72 together coordinate Zn(2+). The 4-imidazolone-5-propanoate site is built by Arg79, Tyr142, and His174. Tyr142 contacts N-formimidoyl-L-glutamate. His234 is a Fe(3+) binding site. His234 lines the Zn(2+) pocket. 4-imidazolone-5-propanoate is bound at residue Glu237. Asp308 is a Fe(3+) binding site. Asp308 provides a ligand contact to Zn(2+).

The protein belongs to the metallo-dependent hydrolases superfamily. HutI family. Requires Zn(2+) as cofactor. The cofactor is Fe(3+).

The protein resides in the cytoplasm. It carries out the reaction 4-imidazolone-5-propanoate + H2O = N-formimidoyl-L-glutamate. The protein operates within amino-acid degradation; L-histidine degradation into L-glutamate; N-formimidoyl-L-glutamate from L-histidine: step 3/3. Functionally, catalyzes the hydrolytic cleavage of the carbon-nitrogen bond in imidazolone-5-propanoate to yield N-formimidoyl-L-glutamate. It is the third step in the universal histidine degradation pathway. The chain is Imidazolonepropionase from Thermoplasma volcanium (strain ATCC 51530 / DSM 4299 / JCM 9571 / NBRC 15438 / GSS1).